Here is a 288-residue protein sequence, read N- to C-terminus: uncharacterized protein (288 aa).

NAD(+) contacts are provided by residues 6–20 (GFIG…MASH) and T97. Residue K172 is part of the active site. Residue K240 coordinates NAD(+).

This sequence belongs to the HIBADH-related family.

The protein resides in the cell membrane. It is found in the membrane raft. This is an uncharacterized protein from Bacillus subtilis (strain 168).